The sequence spans 245 residues: MLVIPAIDLKDGVCVRLEQGLMDRDTVFNDNPASQALEWQNQGAELLHIVDLDGAFAGTPRNKAAIEAIVKAISIPAQLGGGIRDLATIESYLSLGLSRVIIGTAAQRNPQLVKEACAKFPGRIVVGIDAKAGMVAVQGWAEVTGITAVDLARKFEDCGVAAIIYTDISRDGMLQGPNIEATRSLAEAVAIPVIASGGVSTLKDIENLMTIERSGVTGVITGKAIYTGAIRLHEAIALTGKDNQE.

Residue D8 is the Proton acceptor of the active site. D129 acts as the Proton donor in catalysis.

It belongs to the HisA/HisF family.

It is found in the cytoplasm. The enzyme catalyses 1-(5-phospho-beta-D-ribosyl)-5-[(5-phospho-beta-D-ribosylamino)methylideneamino]imidazole-4-carboxamide = 5-[(5-phospho-1-deoxy-D-ribulos-1-ylimino)methylamino]-1-(5-phospho-beta-D-ribosyl)imidazole-4-carboxamide. Its pathway is amino-acid biosynthesis; L-histidine biosynthesis; L-histidine from 5-phospho-alpha-D-ribose 1-diphosphate: step 4/9. The protein is 1-(5-phosphoribosyl)-5-[(5-phosphoribosylamino)methylideneamino] imidazole-4-carboxamide isomerase of Pelobacter propionicus (strain DSM 2379 / NBRC 103807 / OttBd1).